A 426-amino-acid chain; its full sequence is Glutamate-1-semialdehyde 2,1-aminomutase (426 aa).

Residue Lys-265 is modified to N6-(pyridoxal phosphate)lysine.

This sequence belongs to the class-III pyridoxal-phosphate-dependent aminotransferase family. HemL subfamily. In terms of assembly, homodimer. The cofactor is pyridoxal 5'-phosphate.

The protein localises to the cytoplasm. The catalysed reaction is (S)-4-amino-5-oxopentanoate = 5-aminolevulinate. The protein operates within porphyrin-containing compound metabolism; protoporphyrin-IX biosynthesis; 5-aminolevulinate from L-glutamyl-tRNA(Glu): step 2/2. The sequence is that of Glutamate-1-semialdehyde 2,1-aminomutase from Escherichia coli O127:H6 (strain E2348/69 / EPEC).